Here is a 473-residue protein sequence, read N- to C-terminus: MSSIKKTLAFSLGTFFSRITGLVRDIILAKTFGASSTLDAYYVSIVFPFFLRRTFAEGAMSSAFMAIYKKLKNKEEKAQFTSAVLTSLGLVTLLIVFLSEVFPYFMASIFATGADEEVKSLAADLIRLTAPFITIVFVWAVFYSVHNASHRYFLPALTPMFSNVGVIVGCLFGDVRWAAAGFTIGGLAALLVLLPFGKFRYRPTFKGLGEFYRLFFGTFMTMAVSQVTTLIDVNVASFLDPGSLSLIQLSSRLYQLPLGIFGVAVSTVALSTLSESEGDFHENLKDFISKSLFLTLPSSIGLMALSERIISLLFGYGAFTHEDVKKSAQILFMYAIGLCFVSLFNLLSRAYHASKEVKTPFFATLLVSAVNISLDVILGFTMGASGIALATSVSYIAGFVFLTLRMKPSFDKKIFKISLASAVMGTVILLLRGSFKGNLGTIFLVLIGVFVYVLFSKLLKIEELEEILRRGSH.

Transmembrane regions (helical) follow at residues 31-51 (TFGA…PFFL), 90-110 (LVTL…ASIF), 125-145 (LIRL…FYSV), 153-173 (FLPA…CLFG), 177-197 (WAAA…LPFG), 215-235 (FFGT…DVNV), 253-273 (LYQL…LSTL), 300-320 (IGLM…GAFT), 327-347 (SAQI…FNLL), 360-380 (PFFA…ILGF), 382-402 (MGAS…FVFL), 414-434 (IFKI…LRGS), and 439-459 (LGTI…SKLL).

The protein belongs to the MurJ/MviN family.

The protein localises to the cell inner membrane. The protein operates within cell wall biogenesis; peptidoglycan biosynthesis. Functionally, involved in peptidoglycan biosynthesis. Transports lipid-linked peptidoglycan precursors from the inner to the outer leaflet of the cytoplasmic membrane. The polypeptide is Probable lipid II flippase MurJ (Thermotoga maritima (strain ATCC 43589 / DSM 3109 / JCM 10099 / NBRC 100826 / MSB8)).